Reading from the N-terminus, the 114-residue chain is MVKFSKVLMLMVLAGTVSAAFAAEGDPMARAVFYGALAIGAGVAIGAAAGGGAAGLGNAIRGVLEGMARNPNMGPKLLTTMFIGMALIETFVLYALLIAIIFIFTGIFDSKAGF.

The next 2 membrane-spanning stretches (helical) occupy residues Ala31–Gly51 and Ile88–Phe108.

Belongs to the ATPase C chain family. In terms of assembly, F-type ATPases have 2 components, F(1) - the catalytic core - and F(0) - the membrane proton channel. F(1) has five subunits: alpha(3), beta(3), gamma(1), delta(1), epsilon(1). F(0) has three main subunits: a(1), b(2) and c(10-14). The alpha and beta chains form an alternating ring which encloses part of the gamma chain. F(1) is attached to F(0) by a central stalk formed by the gamma and epsilon chains, while a peripheral stalk is formed by the delta and b chains.

The protein localises to the cell inner membrane. Its function is as follows. F(1)F(0) ATP synthase produces ATP from ADP in the presence of a proton or sodium gradient. F-type ATPases consist of two structural domains, F(1) containing the extramembraneous catalytic core and F(0) containing the membrane proton channel, linked together by a central stalk and a peripheral stalk. During catalysis, ATP synthesis in the catalytic domain of F(1) is coupled via a rotary mechanism of the central stalk subunits to proton translocation. Key component of the F(0) channel; it plays a direct role in translocation across the membrane. A homomeric c-ring of between 10-14 subunits forms the central stalk rotor element with the F(1) delta and epsilon subunits. The chain is ATP synthase subunit c from Sulfurihydrogenibium sp. (strain YO3AOP1).